A 65-amino-acid chain; its full sequence is Putative beta-neurotoxin RjAa12 (65 aa).

The 64-residue stretch at 1–64 (KEGYPVGRDG…VWDSSTNKCG (64 aa)) folds into the LCN-type CS-alpha/beta domain. Cystine bridges form between Cys11–Cys63, Cys15–Cys37, Cys22–Cys44, and Cys26–Cys46.

It belongs to the long (4 C-C) scorpion toxin superfamily. Sodium channel inhibitor family. Beta subfamily. Expressed by the venom gland.

The protein resides in the secreted. Beta toxins bind voltage-independently at site-4 of sodium channels (Nav) and shift the voltage of activation toward more negative potentials thereby affecting sodium channel activation and promoting spontaneous and repetitive firing. The sequence is that of Putative beta-neurotoxin RjAa12 from Rhopalurus junceus (Caribbean blue scorpion).